The following is a 110-amino-acid chain: Holo-[acyl-carrier-protein] synthase (110 aa).

Residues Asp8 and Glu54 each coordinate Mg(2+).

This sequence belongs to the P-Pant transferase superfamily. AcpS family. Mg(2+) serves as cofactor.

The protein resides in the cytoplasm. The enzyme catalyses apo-[ACP] + CoA = holo-[ACP] + adenosine 3',5'-bisphosphate + H(+). Its function is as follows. Transfers the 4'-phosphopantetheine moiety from coenzyme A to a Ser of acyl-carrier-protein. In Mycoplasma capricolum subsp. capricolum (strain California kid / ATCC 27343 / NCTC 10154), this protein is Holo-[acyl-carrier-protein] synthase.